Reading from the N-terminus, the 346-residue chain is Ion-translocating oxidoreductase complex subunit D (346 aa).

The next 4 helical transmembrane spans lie at 20–40 (IMIQVMLACLPGLMALTTFFG), 42–62 (GIIIQLVIACVTALVAEGVVL), 69–91 (LASRLGDGSALLTALLLALSLPP), and 120–140 (PFNPAMVGYVVLLISFPVQMT). Threonine 187 is subject to FMN phosphoryl threonine. Transmembrane regions (helical) follow at residues 212–232 (ASAGWTWANIGFLLGGLYLIW), 242–262 (LSLLAAMLIGAGLGHWLAPVV), 264–284 (APPLLHLFSGATMLGAFFIAT), 290–310 (AATVRGRVIFGALTGLLVWLI), and 314–334 (GGYPDGVAFAVLLANICVPLI).

This sequence belongs to the NqrB/RnfD family. The complex is composed of six subunits: RnfA, RnfB, RnfC, RnfD, RnfE and RnfG. FMN serves as cofactor.

It is found in the cell inner membrane. Part of a membrane-bound complex that couples electron transfer with translocation of ions across the membrane. The chain is Ion-translocating oxidoreductase complex subunit D from Sodalis glossinidius (strain morsitans).